The chain runs to 119 residues: Large ribosomal subunit protein bL12 (119 aa).

Belongs to the bacterial ribosomal protein bL12 family. Homodimer. Part of the ribosomal stalk of the 50S ribosomal subunit. Forms a multimeric L10(L12)X complex, where L10 forms an elongated spine to which 2 to 4 L12 dimers bind in a sequential fashion. Binds GTP-bound translation factors.

In terms of biological role, forms part of the ribosomal stalk which helps the ribosome interact with GTP-bound translation factors. Is thus essential for accurate translation. This chain is Large ribosomal subunit protein bL12, found in Bacillus cytotoxicus (strain DSM 22905 / CIP 110041 / 391-98 / NVH 391-98).